A 659-amino-acid chain; its full sequence is Exoribonuclease 2 (659 aa).

The RNB domain maps to 189 to 531 (RENLTALHFV…NHRLIKAVLA (343 aa)). The region spanning 576–658 (NVEFNAEVQD…ATRSIVGEIL (83 aa)) is the S1 motif domain.

The protein belongs to the RNR ribonuclease family. RNase II subfamily.

The protein localises to the cytoplasm. It catalyses the reaction Exonucleolytic cleavage in the 3'- to 5'-direction to yield nucleoside 5'-phosphates.. Involved in mRNA degradation. Hydrolyzes single-stranded polyribonucleotides processively in the 3' to 5' direction. This is Exoribonuclease 2 from Haemophilus influenzae (strain 86-028NP).